A 131-amino-acid chain; its full sequence is Holo-[acyl-carrier-protein] synthase (131 aa).

Mg(2+) contacts are provided by aspartate 8 and glutamate 59.

It belongs to the P-Pant transferase superfamily. AcpS family. Requires Mg(2+) as cofactor.

The protein resides in the cytoplasm. The catalysed reaction is apo-[ACP] + CoA = holo-[ACP] + adenosine 3',5'-bisphosphate + H(+). Its function is as follows. Transfers the 4'-phosphopantetheine moiety from coenzyme A to a Ser of acyl-carrier-protein. In Paramagnetospirillum magneticum (strain ATCC 700264 / AMB-1) (Magnetospirillum magneticum), this protein is Holo-[acyl-carrier-protein] synthase.